Reading from the N-terminus, the 397-residue chain is DNA-directed RNA polymerase subunit Rpo1C (397 aa).

This sequence belongs to the RNA polymerase beta' chain family. As to quaternary structure, part of the RNA polymerase complex.

The protein resides in the cytoplasm. It catalyses the reaction RNA(n) + a ribonucleoside 5'-triphosphate = RNA(n+1) + diphosphate. DNA-dependent RNA polymerase (RNAP) catalyzes the transcription of DNA into RNA using the four ribonucleoside triphosphates as substrates. Forms part of the jaw domain. This chain is DNA-directed RNA polymerase subunit Rpo1C, found in Methanosarcina acetivorans (strain ATCC 35395 / DSM 2834 / JCM 12185 / C2A).